The primary structure comprises 616 residues: Protein decapentaplegic (616 aa).

The N-terminal stretch at 1–23 (MRAWILLLAVLATSQPIVQVAST) is a signal peptide. Residues 24–474 (EDTSISQRFI…DGRHKARSIR (451 aa)) constitute a propeptide that is removed on maturation. The disordered stretch occupies residues 80 to 188 (SDSDSDNNNN…TSTESHQSPI (109 aa)). Low complexity predominate over residues 86-105 (NNNNNYKNRNNNNNNLNKGP). Residues 106–115 (RNNKNKGNKH) show a composition bias toward basic residues. The segment covering 116–139 (SKSDANRQFNEVHKPRTDQLENSK) has biased composition (basic and acidic residues). Asn-147 carries an N-linked (GlcNAc...) asparagine glycan. Polar residues predominate over residues 173–188 (ATTTALTSTESHQSPI). Asn-360 and Asn-395 each carry an N-linked (GlcNAc...) asparagine glycan. The interval 470–512 (ARSIRDVSGGGGGGGGAGEGGKGNGGGRNRRHQRRPARRKNHE) is disordered. The segment covering 477–496 (SGGGGGGGGAGEGGKGNGGG) has biased composition (gly residues). The span at 497–509 (RNRRHQRRPARRK) shows a compositional bias: basic residues. 3 cysteine pairs are disulfide-bonded: Cys-515-Cys-581, Cys-544-Cys-613, and Cys-548-Cys-615. A glycan (N-linked (GlcNAc...) asparagine) is linked at Asn-557.

It belongs to the TGF-beta family. Heterodimers of scw/dpp are the active subunit, dpp/dpp homodimers elicit a basal response and scw/scw homodimers alone are ineffective in specifying a dorsal pattern. Expressed in the imaginal discs associated with establishment of the proximal-distal axis of the appendages, and midgut mesoderm.

The protein localises to the secreted. In terms of biological role, acts as an extracellular morphogen to establish at least two cellular response thresholds within the dorsal half of the drosophila embryo. Required for the proper development of the embryonic dorsal hypoderm, for viability of larvae and for cell viability of the epithelial cells in the imaginal disks. Acts together with scw. In Drosophila pseudoobscura pseudoobscura (Fruit fly), this protein is Protein decapentaplegic (dpp).